A 309-amino-acid chain; its full sequence is Protoheme IX farnesyltransferase 2 (309 aa).

Transmembrane regions (helical) follow at residues 35–55, 59–79, 107–127, 131–151, 159–179, 186–206, 238–258, and 289–309; these read FKVV…APDV, MGVQ…AAVI, AHAL…LMLW, LTAI…TSFL, IVIG…SETG, WLLV…LAIA, LLAI…IYLI, and FSII…WLLL.

Belongs to the UbiA prenyltransferase family. Protoheme IX farnesyltransferase subfamily.

The protein localises to the cell inner membrane. It catalyses the reaction heme b + (2E,6E)-farnesyl diphosphate + H2O = Fe(II)-heme o + diphosphate. The protein operates within porphyrin-containing compound metabolism; heme O biosynthesis; heme O from protoheme: step 1/1. In terms of biological role, converts heme B (protoheme IX) to heme O by substitution of the vinyl group on carbon 2 of heme B porphyrin ring with a hydroxyethyl farnesyl side group. The sequence is that of Protoheme IX farnesyltransferase 2 from Pseudoalteromonas translucida (strain TAC 125).